A 971-amino-acid polypeptide reads, in one-letter code: UPF0182 protein RER_22310 (971 aa).

Helical transmembrane passes span 16–36 (ILLVVAVVVAALLLVGPRLIG), 61–81 (FVLFLVVGIVVGAIVWLAMLL), 112–132 (LFGVIIPVAIGILSGLIAQAN), 172–192 (WLFVSILLAFVANLVTHYVFG), 209–229 (VQLAVIAGTFVLLKAVAYWFD), 257–277 (AKLILLSIAVICALAFFASIF), and 286–306 (MAVALLVLSSVLVGAVYPMIV). Residues 890–927 (GSAATVTQPAPDPDTGAQPETPTTPTAPAPPASSDDVT) are disordered.

It belongs to the UPF0182 family.

It is found in the cell membrane. In Rhodococcus erythropolis (strain PR4 / NBRC 100887), this protein is UPF0182 protein RER_22310.